A 131-amino-acid polypeptide reads, in one-letter code: uncharacterized protein (131 aa).

The first 19 residues, 1 to 19 (MRESLFIIFFQFVCHSSNS), serve as a signal peptide directing secretion. 2 consecutive transmembrane segments (helical) span residues 33 to 53 (PLLT…ALFF) and 111 to 131 (VSFN…FFLF).

The protein localises to the membrane. This is an uncharacterized protein from Saccharomyces cerevisiae (strain ATCC 204508 / S288c) (Baker's yeast).